The primary structure comprises 471 residues: Uronate isomerase (471 aa).

The protein belongs to the metallo-dependent hydrolases superfamily. Uronate isomerase family.

The enzyme catalyses D-glucuronate = D-fructuronate. The catalysed reaction is aldehydo-D-galacturonate = keto-D-tagaturonate. It functions in the pathway carbohydrate metabolism; pentose and glucuronate interconversion. In Cellvibrio japonicus (strain Ueda107) (Pseudomonas fluorescens subsp. cellulosa), this protein is Uronate isomerase.